The chain runs to 306 residues: 2-phospho-L-lactate transferase (306 aa).

Positions 54 and 93 each coordinate 7,8-didemethyl-8-hydroxy-5-deazariboflavin.

Belongs to the CofD family. In terms of assembly, homodimer. The cofactor is Mg(2+).

The catalysed reaction is (2S)-lactyl-2-diphospho-5'-guanosine + 7,8-didemethyl-8-hydroxy-5-deazariboflavin = oxidized coenzyme F420-0 + GMP + H(+). It functions in the pathway cofactor biosynthesis; coenzyme F420 biosynthesis. In terms of biological role, catalyzes the transfer of the 2-phospholactate moiety from (2S)-lactyl-2-diphospho-5'-guanosine to 7,8-didemethyl-8-hydroxy-5-deazariboflavin (FO) with the formation of oxidized coenzyme F420-0 and GMP. This chain is 2-phospho-L-lactate transferase, found in Methanothermobacter thermautotrophicus (strain ATCC 29096 / DSM 1053 / JCM 10044 / NBRC 100330 / Delta H) (Methanobacterium thermoautotrophicum).